The sequence spans 192 residues: dTTP/UTP pyrophosphatase (192 aa).

The active-site Proton acceptor is D68.

This sequence belongs to the Maf family. YhdE subfamily. A divalent metal cation is required as a cofactor.

The protein localises to the cytoplasm. It carries out the reaction dTTP + H2O = dTMP + diphosphate + H(+). The enzyme catalyses UTP + H2O = UMP + diphosphate + H(+). Its function is as follows. Nucleoside triphosphate pyrophosphatase that hydrolyzes dTTP and UTP. May have a dual role in cell division arrest and in preventing the incorporation of modified nucleotides into cellular nucleic acids. The protein is dTTP/UTP pyrophosphatase of Cereibacter sphaeroides (strain ATCC 17023 / DSM 158 / JCM 6121 / CCUG 31486 / LMG 2827 / NBRC 12203 / NCIMB 8253 / ATH 2.4.1.) (Rhodobacter sphaeroides).